The primary structure comprises 549 residues: Elongator complex protein 3 (549 aa).

The Radical SAM core domain occupies 84–374 (RTASGIAVVA…YRVQRDIPMP (291 aa)). 3 residues coordinate [4Fe-4S] cluster: Cys-101, Cys-111, and Cys-114. Acetyl-CoA contacts are provided by residues Lys-166, 476 to 479 (ELHV), 499 to 501 (FGM), and Tyr-532. Positions 398–549 (TECRDVRTRE…EGPYMVKKLD (152 aa)) constitute an N-acetyltransferase domain.

Belongs to the ELP3 family. Component of the elongator complex. Interacts with transcriptional repressors snai1 and snai2; interaction with snai1 inhibits its ubiquitination and stabilizes it. Requires [4Fe-4S] cluster as cofactor.

The protein resides in the cytoplasm. Its subcellular location is the nucleus. The enzyme catalyses uridine(34) in tRNA + acetyl-CoA + S-adenosyl-L-methionine + H2O = 5-(carboxymethyl)uridine(34) in tRNA + 5'-deoxyadenosine + L-methionine + CoA + 2 H(+). The protein operates within tRNA modification; 5-methoxycarbonylmethyl-2-thiouridine-tRNA biosynthesis. Its function is as follows. Catalytic tRNA acetyltransferase subunit of the elongator complex which is required for multiple tRNA modifications, including mcm5U (5-methoxycarbonylmethyl uridine), mcm5s2U (5-methoxycarbonylmethyl-2-thiouridine), and ncm5U (5-carbamoylmethyl uridine). In the elongator complex, acts as a tRNA uridine(34) acetyltransferase by mediating formation of carboxymethyluridine in the wobble base at position 34 in tRNAs. Stabilizes transcriptional repressor snai1 by inhibiting its ubiquitination which promotes neural crest cell migration. The polypeptide is Elongator complex protein 3 (Xenopus tropicalis (Western clawed frog)).